Here is a 342-residue protein sequence, read N- to C-terminus: Phosphate acyltransferase (342 aa).

It belongs to the PlsX family. Homodimer. Probably interacts with PlsY.

It localises to the cytoplasm. The catalysed reaction is a fatty acyl-[ACP] + phosphate = an acyl phosphate + holo-[ACP]. The protein operates within lipid metabolism; phospholipid metabolism. Functionally, catalyzes the reversible formation of acyl-phosphate (acyl-PO(4)) from acyl-[acyl-carrier-protein] (acyl-ACP). This enzyme utilizes acyl-ACP as fatty acyl donor, but not acyl-CoA. The sequence is that of Phosphate acyltransferase from Shewanella woodyi (strain ATCC 51908 / MS32).